Reading from the N-terminus, the 271-residue chain is MLPTVFIVSDGTGITAETFAHSILSQFDQKFRLVRVPFVDSLEKAYATVEKINEAAVHDGRRSIVFTTLVDSESNEIVKRSNALVLDMFQRFVEPLEQELQLKSSHAMGRGHQNADTEEYKTRIEAINFSLAHDDGQSNRNLSEADVILVGVSRSGKTPTSLYLAMQYGVKAANYPLIPEDFERGKLPSALAPHRDKLFGLSIDPQRLSEIRNERRPGSKYAAPENCRYEINEAEAMMRREGIKWLSSTHKSIEEIATTILQEIRLERQSY.

151 to 158 (GVSRSGKT) is a binding site for ADP.

Belongs to the pyruvate, phosphate/water dikinase regulatory protein family. PSRP subfamily.

The catalysed reaction is [pyruvate, water dikinase] + ADP = [pyruvate, water dikinase]-phosphate + AMP + H(+). It catalyses the reaction [pyruvate, water dikinase]-phosphate + phosphate + H(+) = [pyruvate, water dikinase] + diphosphate. In terms of biological role, bifunctional serine/threonine kinase and phosphorylase involved in the regulation of the phosphoenolpyruvate synthase (PEPS) by catalyzing its phosphorylation/dephosphorylation. The polypeptide is Putative phosphoenolpyruvate synthase regulatory protein (Burkholderia multivorans (strain ATCC 17616 / 249)).